The sequence spans 510 residues: Glycogen synthase (510 aa).

Position 18 (lysine 18) interacts with ADP-alpha-D-glucose.

Belongs to the glycosyltransferase 1 family. Bacterial/plant glycogen synthase subfamily.

The enzyme catalyses [(1-&gt;4)-alpha-D-glucosyl](n) + ADP-alpha-D-glucose = [(1-&gt;4)-alpha-D-glucosyl](n+1) + ADP + H(+). It functions in the pathway glycan biosynthesis; glycogen biosynthesis. Functionally, synthesizes alpha-1,4-glucan chains using ADP-glucose. The sequence is that of Glycogen synthase from Bordetella parapertussis (strain 12822 / ATCC BAA-587 / NCTC 13253).